Reading from the N-terminus, the 132-residue chain is Small ribosomal subunit protein uS8 (132 aa).

The protein belongs to the universal ribosomal protein uS8 family. In terms of assembly, part of the 30S ribosomal subunit. Contacts proteins S5 and S12.

Functionally, one of the primary rRNA binding proteins, it binds directly to 16S rRNA central domain where it helps coordinate assembly of the platform of the 30S subunit. This is Small ribosomal subunit protein uS8 from Bacillus pumilus (strain SAFR-032).